A 206-amino-acid polypeptide reads, in one-letter code: ATP phosphoribosyltransferase (206 aa).

This sequence belongs to the ATP phosphoribosyltransferase family. Short subfamily. In terms of assembly, heteromultimer composed of HisG and HisZ subunits.

It is found in the cytoplasm. The enzyme catalyses 1-(5-phospho-beta-D-ribosyl)-ATP + diphosphate = 5-phospho-alpha-D-ribose 1-diphosphate + ATP. It functions in the pathway amino-acid biosynthesis; L-histidine biosynthesis; L-histidine from 5-phospho-alpha-D-ribose 1-diphosphate: step 1/9. Its function is as follows. Catalyzes the condensation of ATP and 5-phosphoribose 1-diphosphate to form N'-(5'-phosphoribosyl)-ATP (PR-ATP). Has a crucial role in the pathway because the rate of histidine biosynthesis seems to be controlled primarily by regulation of HisG enzymatic activity. In Brachyspira hyodysenteriae (strain ATCC 49526 / WA1), this protein is ATP phosphoribosyltransferase.